A 282-amino-acid chain; its full sequence is Large ribosomal subunit protein uL2 (282 aa).

The segment at 230–282 (AMNPIDHPLGGGEGRSSGGRHPVSPWGMPAKGYKTRDKKKASSRLIVKRRGQK) is disordered. Basic residues predominate over residues 265–282 (RDKKKASSRLIVKRRGQK).

Belongs to the universal ribosomal protein uL2 family. As to quaternary structure, part of the 50S ribosomal subunit. Forms a bridge to the 30S subunit in the 70S ribosome.

Functionally, one of the primary rRNA binding proteins. Required for association of the 30S and 50S subunits to form the 70S ribosome, for tRNA binding and peptide bond formation. It has been suggested to have peptidyltransferase activity; this is somewhat controversial. Makes several contacts with the 16S rRNA in the 70S ribosome. The polypeptide is Large ribosomal subunit protein uL2 (Desulfovibrio desulfuricans (strain ATCC 27774 / DSM 6949 / MB)).